We begin with the raw amino-acid sequence, 132 residues long: NAD(P) transhydrogenase subunit alpha part 2 (132 aa).

3 helical membrane-spanning segments follow: residues 43–63 (PLVF…YVVW), 72–92 (PLMS…MIAI), and 103–123 (LLGS…FIVT).

Complex of an alpha and a beta chain; in Rickettsia, the alpha chain seems to be made of two subunits.

The protein resides in the cell inner membrane. It carries out the reaction NAD(+) + NADPH + H(+)(in) = NADH + NADP(+) + H(+)(out). The transhydrogenation between NADH and NADP is coupled to respiration and ATP hydrolysis and functions as a proton pump across the membrane. This is NAD(P) transhydrogenase subunit alpha part 2 (pntAB) from Rickettsia prowazekii (strain Madrid E).